Here is a 122-residue protein sequence, read N- to C-terminus: Large ribosomal subunit protein uL18 (122 aa).

Belongs to the universal ribosomal protein uL18 family. As to quaternary structure, part of the 50S ribosomal subunit; part of the 5S rRNA/L5/L18/L25 subcomplex. Contacts the 5S and 23S rRNAs.

Functionally, this is one of the proteins that bind and probably mediate the attachment of the 5S RNA into the large ribosomal subunit, where it forms part of the central protuberance. This chain is Large ribosomal subunit protein uL18, found in Dictyoglomus turgidum (strain DSM 6724 / Z-1310).